Here is a 232-residue protein sequence, read N- to C-terminus: 5'-methylthioadenosine/S-adenosylhomocysteine nucleosidase (232 aa).

Catalysis depends on Glu12, which acts as the Proton acceptor. Residues Gly78, Ile152, and 173-174 (ME) contribute to the substrate site. The active-site Proton donor is Asp197.

This sequence belongs to the PNP/UDP phosphorylase family. MtnN subfamily. In terms of assembly, homodimer.

It catalyses the reaction S-adenosyl-L-homocysteine + H2O = S-(5-deoxy-D-ribos-5-yl)-L-homocysteine + adenine. The enzyme catalyses S-methyl-5'-thioadenosine + H2O = 5-(methylsulfanyl)-D-ribose + adenine. The catalysed reaction is 5'-deoxyadenosine + H2O = 5-deoxy-D-ribose + adenine. The protein operates within amino-acid biosynthesis; L-methionine biosynthesis via salvage pathway; S-methyl-5-thio-alpha-D-ribose 1-phosphate from S-methyl-5'-thioadenosine (hydrolase route): step 1/2. In terms of biological role, catalyzes the irreversible cleavage of the glycosidic bond in both 5'-methylthioadenosine (MTA) and S-adenosylhomocysteine (SAH/AdoHcy) to adenine and the corresponding thioribose, 5'-methylthioribose and S-ribosylhomocysteine, respectively. Also cleaves 5'-deoxyadenosine, a toxic by-product of radical S-adenosylmethionine (SAM) enzymes, into 5-deoxyribose and adenine. Thus, is required for in vivo function of the radical SAM enzymes biotin synthase and lipoic acid synthase, that are inhibited by 5'-deoxyadenosine accumulation. The protein is 5'-methylthioadenosine/S-adenosylhomocysteine nucleosidase of Enterobacter sp. (strain 638).